The primary structure comprises 492 residues: Cytochrome P450 26A1 (492 aa).

A heme-binding site is contributed by Cys437.

Belongs to the cytochrome P450 family. The cofactor is heme. In terms of tissue distribution, expressed primarily in ovary, brain and eyes.

Its subcellular location is the endoplasmic reticulum membrane. The protein resides in the microsome membrane. The catalysed reaction is all-trans-retinoate + reduced [NADPH--hemoprotein reductase] + O2 = all-trans-(4S)-hydroxyretinoate + oxidized [NADPH--hemoprotein reductase] + H2O + H(+). Functionally, a cytochrome P450 monooxygenase involved in the metabolism of all-trans retinoic acid (atRA), a signaling molecule that binds to retinoic acid receptors and regulates gene transcription. May regulate at-RA signaling during hindbrain development. Mechanistically, uses molecular oxygen inserting one oxygen atom into a substrate, and reducing the second into a water molecule, with two electrons provided by NADPH via cytochrome P450 reductase (CPR; NADPH-ferrihemoprotein reductase). Catalyzes the hydroxylation of carbon hydrogen bonds of atRA primarily at C-4. Has no activity toward 9-cis and 13-cis retinoic acid stereoisomers. May play a role in the oxidative metabolism of xenobiotics such as tazarotenic acid. The sequence is that of Cytochrome P450 26A1 (cyp26a1) from Xenopus laevis (African clawed frog).